Here is a 188-residue protein sequence, read N- to C-terminus: Elongation factor P (188 aa).

It belongs to the elongation factor P family.

It localises to the cytoplasm. The protein operates within protein biosynthesis; polypeptide chain elongation. Involved in peptide bond synthesis. Stimulates efficient translation and peptide-bond synthesis on native or reconstituted 70S ribosomes in vitro. Probably functions indirectly by altering the affinity of the ribosome for aminoacyl-tRNA, thus increasing their reactivity as acceptors for peptidyl transferase. The chain is Elongation factor P from Anaplasma phagocytophilum (strain HZ).